We begin with the raw amino-acid sequence, 251 residues long: uncharacterized protein (251 aa).

The interval 229-251 (TSTETSPEHQADLKDDNSDISST) is disordered. Residues 234 to 245 (SPEHQADLKDDN) are compositionally biased toward basic and acidic residues.

This is an uncharacterized protein from Acanthamoeba polyphaga (Amoeba).